Here is a 377-residue protein sequence, read N- to C-terminus: MQVVSSATLPPTVASADLAIVGGRSSDEDVIKYSAIQTIKQEQQQQQQQQSNTALPSYNFPFFNGMQNDFPPNRMLYNDNTMQKSENDHFTGMNLSTSASSSGNSTSSKDQSRRQFYTESSNSSGNGAAATSGSNGSSSSTESKSDVFNISMNAFAATPGSKSEDHNIPSFNMLSSYYTGALKLSNSTSFANPDPYQILGPTSKNLAHSGSGQTQLWQFLLELLSDKRYSEVITWEGTQGEFKLVDPDEVARKWGERKSKPNMNYDKMSRALRYYYDKNIMAKVHGKRYAYKFDFQGIAQALQPPTASHPQDYFNSHAMGRIAPDFSSWTSANYRSLNIAGFNNGSTIFNPSVNYSAFGATGTSNNLSAARAFPLYR.

Positions 72–143 (PNRMLYNDNT…SNGSSSSTES (72 aa)) are disordered. 2 stretches are compositionally biased toward low complexity: residues 96–109 (STSASSSGNSTSSK) and 118–142 (TESSNSSGNGAAATSGSNGSSSSTE). Residues 214-294 (TQLWQFLLEL…HGKRYAYKFD (81 aa)) constitute a DNA-binding region (ETS).

The protein belongs to the ETS family. As to expression, expressed in the A-neurons in the male-specific genital sensilla (simple sense organs) known as rays.

It is found in the nucleus. It localises to the cell projection. Its subcellular location is the neuron projection. In terms of biological role, transcription factor. Probably binds to DNA sequences containing the consensus motif 5'-CGGA[AT][AG]-3'. Positively modulates expression of dopamine pathway genes, acting as a terminal selector for differentiation of dopaminergic neurons; may act in concert with homeobox proteins ceh-40, ceh-43 and ceh-20. Required for axon navigation in some interneurons, perhaps acting in the same pathways as basement membrane protein nid-1 and unc-6/netrin. Plays a role in the differentiation of the ventral cord pioneer neuron AVG. Required for morphogenesis of the pharynx. This is Transcription factor ast-1 from Caenorhabditis elegans.